Consider the following 457-residue polypeptide: tRNA-2-methylthio-N(6)-dimethylallyladenosine synthase (457 aa).

The MTTase N-terminal domain maps to 3–120 (KKVYVKTFGC…LPQMIDARRE (118 aa)). Residues Cys-12, Cys-49, Cys-83, Cys-157, Cys-161, and Cys-164 each contribute to the [4Fe-4S] cluster site. The 235-residue stretch at 143 to 377 (RVEGPSAFVS…QATIEENVAR (235 aa)) folds into the Radical SAM core domain. The 68-residue stretch at 380 to 447 (QSMLGKVERI…PHSLRGELVL (68 aa)) folds into the TRAM domain.

This sequence belongs to the methylthiotransferase family. MiaB subfamily. As to quaternary structure, monomer. [4Fe-4S] cluster serves as cofactor.

Its subcellular location is the cytoplasm. It catalyses the reaction N(6)-dimethylallyladenosine(37) in tRNA + (sulfur carrier)-SH + AH2 + 2 S-adenosyl-L-methionine = 2-methylsulfanyl-N(6)-dimethylallyladenosine(37) in tRNA + (sulfur carrier)-H + 5'-deoxyadenosine + L-methionine + A + S-adenosyl-L-homocysteine + 2 H(+). In terms of biological role, catalyzes the methylthiolation of N6-(dimethylallyl)adenosine (i(6)A), leading to the formation of 2-methylthio-N6-(dimethylallyl)adenosine (ms(2)i(6)A) at position 37 in tRNAs that read codons beginning with uridine. The sequence is that of tRNA-2-methylthio-N(6)-dimethylallyladenosine synthase from Burkholderia mallei (strain NCTC 10247).